The following is a 327-amino-acid chain: MSSQFEQLKLLSVLVCDTGDPELVKTSGSQDATTNPSLILKVAQEPKYQELLTEAIAWGIRQNGDDIQTLTFVLDKIQVNFGLEILKCIPGRVSLEIDARLSFNTEAMIQRAIFLSELFAATGGDKKRLLVKIPGTWEGIRAVEVLEKQGIACNVTLIFNLIQAIAAAKANATLISPFVGRIYDWWIAAYGDEGYSIDADPGVASVSNIYTYYKKFDIPTQIMAASFRSKEQVLALAGCDLLTVSPKLLDELKKDQSPVAKKLDVAAAKKLDVQPVELTESVFRFLMNEDAMATEKLAEGIRIFSGDTQILEAAVTEFIKQIAAQDA.

K132 (schiff-base intermediate with substrate) is an active-site residue.

Belongs to the transaldolase family. Type 1 subfamily. Homodimer.

It localises to the cytoplasm. It catalyses the reaction D-sedoheptulose 7-phosphate + D-glyceraldehyde 3-phosphate = D-erythrose 4-phosphate + beta-D-fructose 6-phosphate. The protein operates within carbohydrate degradation; pentose phosphate pathway; D-glyceraldehyde 3-phosphate and beta-D-fructose 6-phosphate from D-ribose 5-phosphate and D-xylulose 5-phosphate (non-oxidative stage): step 2/3. In terms of biological role, transaldolase is important for the balance of metabolites in the pentose-phosphate pathway. The protein is Transaldolase of Chlamydia caviae (strain ATCC VR-813 / DSM 19441 / 03DC25 / GPIC) (Chlamydophila caviae).